The following is a 568-amino-acid chain: PWWP domain-containing protein2 (568 aa).

The segment covering methionine 1–glutamate 19 has biased composition (basic and acidic residues). Disordered stretches follow at residues methionine 1 to glycine 126, glutamine 213 to lysine 340, and isoleucine 465 to lysine 568. The span at methionine 29 to glycine 46 shows a compositional bias: polar residues. 2 stretches are compositionally biased toward basic and acidic residues: residues glutamate 48–glutamate 88 and lysine 100–asparagine 122. Residues proline 125–glutamate 189 enclose the PWWP domain. Low complexity predominate over residues serine 214–serine 228. The span at glutamate 229–tyrosine 249 shows a compositional bias: acidic residues. The span at arginine 255–threonine 266 shows a compositional bias: basic residues. Residues leucine 281–alanine 292 show a composition bias toward polar residues. Over residues lysine 325–glutamate 336 the composition is skewed to acidic residues. Basic and acidic residues-rich tracts occupy residues lysine 489 to alanine 500 and aspartate 514 to alanine 541.

In Schizosaccharomyces pombe (strain 972 / ATCC 24843) (Fission yeast), this protein is PWWP domain-containing protein2 (pdp2).